We begin with the raw amino-acid sequence, 550 residues long: Alkaline phosphatase PhoV (550 aa).

An N-terminal signal peptide occupies residues 1–20 (MKIKLLCISLAVLFCSSANA). Positions 48 and 89 each coordinate Zn(2+). The active-site Phosphothreonine intermediate is Thr89. Residues Asn110 and 171-173 (KDR) each bind substrate. Positions 313, 317, 360, 361, and 491 each coordinate Zn(2+).

Requires Zn(2+) as cofactor.

The protein resides in the cell inner membrane. It carries out the reaction a phosphate monoester + H2O = an alcohol + phosphate. Its activity is regulated as follows. Subject to competitive inhibition by phosphate. Inhibited by manganese. Magnesium mildly increases enzyme activity when the zinc concentration is suboptimal. Optimal activity is dependent on the presence of 0.01-2% Triton X-100. Triton X-100 at a concentration of 0.05% increases the activity about fivefold relative to that in its absence. The enzyme is even active in Triton X-100 concentrations up to 80%. 50% inhibition by 4 mM EDTA and 50% inhibition by 48 mM sodium citrate. In terms of biological role, alkaline phosphatase with broad substrate specificity. The protein is Alkaline phosphatase PhoV of Synechococcus elongatus (strain ATCC 33912 / PCC 7942 / FACHB-805) (Anacystis nidulans R2).